A 55-amino-acid chain; its full sequence is Large ribosomal subunit protein bL33 (55 aa).

It belongs to the bacterial ribosomal protein bL33 family.

This is Large ribosomal subunit protein bL33 from Xanthomonas oryzae pv. oryzae (strain PXO99A).